The primary structure comprises 5289 residues: Mucin-2 (5289 aa).

An N-terminal signal peptide occupies residues 1 to 20 (MGLPLARLAAVCLALSLAGG). Phosphoserine is present on Ser-21. Cu(2+) is bound at residue His-34. A VWFD 1 domain is found at 35–207 (NVCSTWGNFH…KINQPDVVCE (173 aa)). 29 disulfide bridges follow: Cys-37–Cys-169, Cys-59–Cys-206, Cys-67–Cys-166, Cys-218–Cys-255, Cys-225–Cys-250, Cys-237–Cys-275, Cys-257–Cys-263, Cys-265–Cys-291, Cys-295–Cys-329, Cys-308–Cys-321, Cys-312–Cys-351, Cys-331–Cys-345, Cys-353–Cys-375, Cys-370–Cys-387, Cys-373–Cys-382, Cys-391–Cys-528, Cys-413–Cys-563, Cys-435–Cys-443, Cys-574–Cys-619, Cys-588–Cys-614, Cys-601–Cys-639, Cys-621–Cys-627, Cys-629–Cys-654, Cys-661–Cys-698, Cys-674–Cys-688, Cys-678–Cys-718, Cys-700–Cys-712, Cys-720–Cys-742, and Cys-740–Cys-749. Asp-49 contributes to the Ca(2+) binding site. Residues Met-146 and Met-154 each coordinate Cu(+). Glu-156 is a binding site for Cu(2+). Asn-163 carries N-linked (GlcNAc...) asparagine glycosylation. Residues Asp-171, Asn-173, Leu-175, and Glu-180 each contribute to the Ca(2+) site. Residue His-277 coordinates Cu(2+). Residues 295 to 351 (CPGNLVYLESGSPCMDTCSHLEVSSLCEEHRMDGCFCPEGTVYDDIGDSGCVPVSQC) enclose the TIL domain. A Cu(2+)-binding site is contributed by His-324. Met-326 contributes to the Cu(+) binding site. One can recognise a VWFD 2 domain in the interval 389–564 (GTCALEGGSH…NTWKAQSSCH (176 aa)). Asp-403 contacts Ca(2+). N-linked (GlcNAc...) asparagine glycosylation occurs at Asn-423. The Ca(2+) site is built by Asn-530, Asn-532, Leu-534, Asp-537, and Asp-538. Asn-670 is a glycosylation site (N-linked (GlcNAc...) asparagine). N-linked (GlcNAc...) asparagine glycosylation is present at Asn-770. 21 disulfide bridges follow: Cys-784-Cys-820, Cys-802-Cys-814, Cys-822-Cys-844, Cys-839-Cys-856, Cys-842-Cys-851, Cys-860-Cys-992, Cys-882-Cys-1027, Cys-891-Cys-989, Cys-909-Cys-916, Cys-1037-Cys-1080, Cys-1051-Cys-1075, Cys-1062-Cys-1102, Cys-1082-Cys-1090, Cys-1092-Cys-1117, Cys-1108-Cys-1137, Cys-1121-Cys-1163, Cys-1145-Cys-1187, Cys-1167-Cys-1181, Cys-1189-Cys-1213, Cys-1208-Cys-1238, and Cys-1211-Cys-1221. Residues 858 to 1028 (GTCSIYGSGH…NSWKEAPTCP (171 aa)) enclose the VWFD 3 domain. Asp-872 lines the Ca(2+) pocket. N-linked (GlcNAc...) asparagine glycosylation occurs at Asn-894. The Ca(2+) site is built by Asn-994, Asp-996, Arg-998, Asn-1001, and Asp-1002. Residues Asn-1139 and Asn-1154 are each glycosylated (N-linked (GlcNAc...) asparagine). Asn-1215, Asn-1230, and Asn-1246 each carry an N-linked (GlcNAc...) asparagine glycan. Residues Thr-1266, Thr-1267, Thr-1269, Thr-1270, Thr-1272, Thr-1275, Thr-1276, Thr-1281, Thr-1282, and Thr-1287 are each glycosylated (O-linked (GalNAc) threonine). Ser-1291 and Ser-1292 each carry an O-linked (GalNAc) serine glycan. O-linked (GalNAc) threonine glycosylation is present at Thr-1293. Ser-1296 is a glycosylation site (O-linked (GalNAc) serine). Thr-1297 is a glycosylation site (O-linked (GalNAc) threonine). Ca(2+)-binding residues include Asn-1310, Asp-1312, His-1313, Ser-1316, Asp-1319, Gly-1321, Asp-1322, Glu-1324, Asp-1381, and Tyr-1382. 5 stretches are compositionally biased toward pro residues: residues 1399–1411 (PSPP…PPPT), 1419–1510 (TTTP…PITP), 1520–1549 (TTTP…PITP), 1559–1628 (TTTP…PITP), and 1638–1679 (TTTP…PPTT). The tract at residues 1399–1773 (PSPPTTTPSP…SITPPTFSPF (375 aa)) is disordered. 6 consecutive repeat copies span residues 1401–1416 (PPTT…TTTL), 1417–1432 (PPTT…TTTP), 1433–1448 (PPTT…TTTP), 1449–1464 (PPTT…TTTP), 1465–1471 (PPTTTPS), and 1472–1478 (PPTTTPS). Positions 1401–1747 (PPTTTPSPPP…SPPTTTMTTL (347 aa)) are approximate repeats. A 7A repeat occupies 1479 to 1494 (PPTTTPSPPTTTTTTP). A 7B repeat occupies 1495-1517 (PPTTTPSPPTTTPITPPASTTTL). The stretch at 1518 to 1533 (PPTTTPSPPTTTTTTP) is one 8A repeat. One copy of the 8B repeat lies at 1534–1556 (PPTTTPSPPTTTPITPPTSTTTL). The stretch at 1557–1572 (PPTTTPSPPPTTTTTP) is one 9A repeat. A 9B repeat occupies 1573–1596 (PPTTTPSPPTTTTPSPPTITTTTP). A 10A repeat occupies 1597 to 1612 (PPTTTPSPPTTTTTTP). The 10B repeat unit spans residues 1613 to 1635 (PPTTTPSPPTTTPITPPTSTTTL). The stretch at 1636-1651 (PPTTTPSPPPTTTTTP) is one 11A repeat. Residues 1652-1675 (PPTTTPSPPTTTTPSPPITTTTTP) form an 11B repeat. A run of 5 repeats spans residues 1676–1683 (PPTTTPSS), 1684–1699 (PITT…MTTP), 1700–1715 (SPTT…TTTP), 1716–1731 (SSTT…MTTP), and 1732–1747 (SPTT…MTTL). 2 stretches are compositionally biased toward low complexity: residues 1680 to 1720 (TPSS…STTT) and 1741 to 1759 (TTTM…LTTT). Pro residues predominate over residues 1760–1770 (PLPPSITPPTF). Asn-1787 and Asn-1820 each carry an N-linked (GlcNAc...) asparagine glycan. 4 stretches are compositionally biased toward low complexity: residues 1885-2158 (MTTT…TMVT), 2165-4238 (GTQT…QTPT), 4269-4315 (TTVT…STAP), and 4329-4430 (STPQ…PSII). Disordered stretches follow at residues 1885–4238 (MTTT…QTPT) and 4269–4430 (TTVT…PSII). Asn-4449, Asn-4461, Asn-4472, and Asn-4483 each carry an N-linked (GlcNAc...) asparagine glycan. The segment at 4492 to 4524 (PTPTPSKSTPTPSKPSSTPSKPTPGTKPPECPD) is disordered. Residues 4496-4511 (PSKSTPTPSKPSSTPS) are compositionally biased toward low complexity. The span at 4512–4522 (KPTPGTKPPEC) shows a compositional bias: pro residues. N-linked (GlcNAc...) asparagine glycosylation is found at Asn-4532, Asn-4548, and Asn-4612. The 184-residue stretch at 4589–4772 (CYCTGWGDPH…VNDPSKPHCP (184 aa)) folds into the VWFD 4 domain. Disulfide bonds link Cys-4591-Cys-4732, Cys-4613-Cys-4771, and Cys-4637-Cys-4645. Asn-4726 and Asn-4737 each carry an N-linked (GlcNAc...) asparagine glycan. Residues 4770 to 4795 (HCPHSSSTTKRPAVTVPGGGKTTPHK) are disordered. Residues Asn-4862, Asn-4897, Asn-4991, Asn-4998, Asn-5065, Asn-5080, Asn-5129, Asn-5148, and Asn-5179 are each glycosylated (N-linked (GlcNAc...) asparagine). The VWFC 1 domain occupies 4927–4996 (CVGPDNVPRE…DTCCNITVCK (70 aa)). The 68-residue stretch at 5034–5101 (GVCVHGNAEY…APGECCKKCE (68 aa)) folds into the VWFC 2 domain. 4 cysteine pairs are disulfide-bonded: Cys-5185-Cys-5232, Cys-5199-Cys-5246, Cys-5208-Cys-5262, and Cys-5212-Cys-5264. Positions 5185–5270 (CSTVPVTTEV…SCQCQDTVCG (86 aa)) constitute a CTCK domain.

In terms of assembly, homomultimer; disulfide-linked. The N- and C-terminus mediate their assembly into higher order structures to form filaments. The CTCK domains of two polypeptides associate in the endoplasmic reticulum to generate intermolecularly disulfide-bonded dimers. These dimers progress to the Golgi apparatus, which is a more acidic environment than the endoplasmic reticulum. Under acidic conditions, the N-termini form non-covalent intermolecular interactions that juxtapose assemblies of the third VWD domain (VWD3) from different CTCK-linked dimers. The VWD3 assemblies then become disulfide bonded to one another to produce long, disulfide-linked polymers that remain highly compact until secretion. Interacts with FCGBP. Interacts with AGR2; disulfide-linked. As to quaternary structure, (Microbial infection) Interacts in vitro with L.monocytogenes internalin proteins InlB, InlC and InlJ; for InlC binding is slightly better at pH 5.5, (the pH of the intestine) than at pH 7.4. In terms of processing, O-glycosylated. O-glycosylation is required for mucin assembly. Goblet cells synthesize two forms of mucin that differ in branched chain O-glycosylation and the site of production in the colon. Post-translationally, may undergo proteolytic cleavage in the outer mucus layer of the colon, contributing to the expanded volume and loose nature of this layer which allows for bacterial colonization in contrast to the inner mucus layer which is dense and devoid of bacteria. At low pH of 6 and under, undergoes autocatalytic cleavage in vitro in the N-terminal region of the fourth VWD domain. It is likely that this also occurs in vivo and is triggered by the low pH of the late secretory pathway. As to expression, colon, small intestine, colonic tumors, bronchus, cervix and gall bladder.

The protein resides in the secreted. Functionally, coats the epithelia of the intestines and other mucus membrane-containing organs to provide a protective, lubricating barrier against particles and infectious agents at mucosal surfaces. Major constituent of the colon mucus, which is mainly formed by large polymeric networks of MUC2 secreted by goblet cells that cover the exposed surfaces of intestine. MUC2 networks form hydrogels that guard the underlying epithelium from pathogens and other hazardous matter entering from the outside world, while permitting nutrient absorption and gas exchange. Acts as a divalent copper chaperone that protects intestinal cells from copper toxicity and facilitates nutritional copper unptake into cells. Binds both Cu(2+) and its reduced form, Cu(1+), at two juxtaposed binding sites: Cu(2+), once reduced to Cu(1+) by vitamin C (ascorbate) or other dietary antioxidants, transits to the other binding site. MUC2-bound Cu(1+) is protected from oxidation in aerobic environments, and can be released for nutritional delivery to cells. Mucin gels store antimicrobial molecules that participate in innate immunity. Mucin glycoproteins also house and feed the microbiome, lubricate tissue surfaces, and may facilitate the removal of contaminants and waste products from the body. Goblet cells synthesize two forms of MUC2 mucin that differ in branched chain O-glycosylation and the site of production in the colon: a (1) 'thick' mucus that wraps the microbiota to form fecal pellets is produced in the proximal, ascending colon. 'Thick' mucus transits along the descending colon and is lubricated by a (2) 'thin' MUC2 mucus produced in the distal colon which adheres to the 'thick' mucus. This chain is Mucin-2, found in Homo sapiens (Human).